Reading from the N-terminus, the 750-residue chain is Neprilysin (750 aa).

Over residues 1–14 (MGKSESQMDITDIN) the composition is skewed to polar residues. Positions 1-20 (MGKSESQMDITDINTPKPKK) are disordered. Glycine 2 is lipidated: N-myristoyl glycine. The Cytoplasmic segment spans residues 2 to 28 (GKSESQMDITDINTPKPKKKQRWTPLE). A phosphoserine mark is found at serine 4 and serine 6. Positions 16-23 (PKPKKKQR) match the Stop-transfer sequence motif. A helical; Signal-anchor for type II membrane protein transmembrane segment spans residues 29-51 (ISLSVLVLLLTIIAVTMIALYAT). Topologically, residues 52 to 750 (YDDGICKSSD…MNPEKKCRVW (699 aa)) are extracellular. The Peptidase M13 domain maps to 56–750 (ICKSSDCIKS…MNPEKKCRVW (695 aa)). Cystine bridges form between cysteine 57/cysteine 62, cysteine 80/cysteine 735, cysteine 88/cysteine 695, cysteine 143/cysteine 411, cysteine 234/cysteine 242, and cysteine 621/cysteine 747. Residue arginine 103 participates in a peptide binding. N-linked (GlcNAc...) asparagine glycosylation is present at asparagine 145. Residues asparagine 285, asparagine 311, asparagine 325, and asparagine 335 are each glycosylated (N-linked (GlcNAc...) asparagine). Histidine 584 contacts Zn(2+). The active site involves glutamate 585. Residue histidine 588 participates in Zn(2+) binding. A glycan (N-linked (GlcNAc...) asparagine) is linked at asparagine 628. Glutamate 647 contributes to the Zn(2+) binding site. The Proton donor role is filled by aspartate 651.

It belongs to the peptidase M13 family. Zn(2+) is required as a cofactor. Post-translationally, myristoylation is a determinant of membrane targeting. Glycosylation at Asn-628 is necessary both for surface expression and neutral endopeptidase activity.

The protein resides in the cell membrane. The enzyme catalyses Preferential cleavage of polypeptides between hydrophobic residues, particularly with Phe or Tyr at P1'.. It catalyses the reaction substance P + H2O = substance P(1-9) + L-Leu-L-Met-NH2. The catalysed reaction is substance P + H2O = substance P(1-7) + L-Phe-Gly-L-Leu-L-Met-NH2. It carries out the reaction neurotensin + H2O = neurotensin(1-11) + L-isoleucyl-L-leucine. The enzyme catalyses neurotensin + H2O = neurotensin(1-10) + L-tyrosyl-L-isoleucyl-L-leucine. Thermolysin-like specificity, but is almost confined on acting on polypeptides of up to 30 amino acids. Biologically important in the destruction of opioid peptides such as Met- and Leu-enkephalins by cleavage of a Gly-Phe bond. Catalyzes cleavage of bradykinin, substance P and neurotensin peptides. Able to cleave angiotensin-1, angiotensin-2 and angiotensin 1-9. Involved in the degradation of atrial natriuretic factor (ANF) and brain natriuretic factor (BNP(1-32)). Displays UV-inducible elastase activity toward skin preelastic and elastic fibers. The sequence is that of Neprilysin (MME) from Pongo abelii (Sumatran orangutan).